We begin with the raw amino-acid sequence, 231 residues long: tRNA (guanine-N(7)-)-methyltransferase (231 aa).

S-adenosyl-L-methionine is bound by residues Glu62, Glu87, Asp114, and Asp137. Residue Asp137 is part of the active site. Substrate contacts are provided by residues Lys141, Asp173, and 210-213 (TKFE).

This sequence belongs to the class I-like SAM-binding methyltransferase superfamily. TrmB family.

It catalyses the reaction guanosine(46) in tRNA + S-adenosyl-L-methionine = N(7)-methylguanosine(46) in tRNA + S-adenosyl-L-homocysteine. It functions in the pathway tRNA modification; N(7)-methylguanine-tRNA biosynthesis. In terms of biological role, catalyzes the formation of N(7)-methylguanine at position 46 (m7G46) in tRNA. The polypeptide is tRNA (guanine-N(7)-)-methyltransferase (Methylococcus capsulatus (strain ATCC 33009 / NCIMB 11132 / Bath)).